The primary structure comprises 103 residues: Nucleoid-associated protein Cgl0243/cg0297 (103 aa).

The protein belongs to the YbaB/EbfC family. As to quaternary structure, homodimer.

It localises to the cytoplasm. The protein resides in the nucleoid. Binds to DNA and alters its conformation. May be involved in regulation of gene expression, nucleoid organization and DNA protection. In Corynebacterium glutamicum (strain ATCC 13032 / DSM 20300 / JCM 1318 / BCRC 11384 / CCUG 27702 / LMG 3730 / NBRC 12168 / NCIMB 10025 / NRRL B-2784 / 534), this protein is Nucleoid-associated protein Cgl0243/cg0297.